Here is a 186-residue protein sequence, read N- to C-terminus: dCTP deaminase (186 aa).

Residue 107-112 (KSTYAR) coordinates dCTP. The Proton donor/acceptor role is filled by Glu133. Gln152, Tyr166, and Gln176 together coordinate dCTP.

Belongs to the dCTP deaminase family. Homotrimer.

It catalyses the reaction dCTP + H2O + H(+) = dUTP + NH4(+). The protein operates within pyrimidine metabolism; dUMP biosynthesis; dUMP from dCTP (dUTP route): step 1/2. Functionally, catalyzes the deamination of dCTP to dUTP. The chain is dCTP deaminase from Campylobacter jejuni (strain RM1221).